A 451-amino-acid chain; its full sequence is Serine--tRNA ligase (451 aa).

L-serine is bound at residue 258-260 (TSE). 289-291 (RSE) lines the ATP pocket. Residue Glu-312 participates in L-serine binding. 376-379 (EISS) lines the ATP pocket. Position 411 (Ser-411) interacts with L-serine.

Belongs to the class-II aminoacyl-tRNA synthetase family. Type-1 seryl-tRNA synthetase subfamily. In terms of assembly, homodimer. The tRNA molecule binds across the dimer.

It localises to the cytoplasm. The catalysed reaction is tRNA(Ser) + L-serine + ATP = L-seryl-tRNA(Ser) + AMP + diphosphate + H(+). It catalyses the reaction tRNA(Sec) + L-serine + ATP = L-seryl-tRNA(Sec) + AMP + diphosphate + H(+). Its pathway is aminoacyl-tRNA biosynthesis; selenocysteinyl-tRNA(Sec) biosynthesis; L-seryl-tRNA(Sec) from L-serine and tRNA(Sec): step 1/1. Functionally, catalyzes the attachment of serine to tRNA(Ser). Is also able to aminoacylate tRNA(Sec) with serine, to form the misacylated tRNA L-seryl-tRNA(Sec), which will be further converted into selenocysteinyl-tRNA(Sec). This is Serine--tRNA ligase from Bordetella bronchiseptica (strain ATCC BAA-588 / NCTC 13252 / RB50) (Alcaligenes bronchisepticus).